A 417-amino-acid chain; its full sequence is Phosphoglycerate kinase 2 (417 aa).

Residue Ser2 is modified to N-acetylserine. Residues Ser2 and Ser4 each carry the phosphoserine modification. The residue at position 11 (Lys11) is an N6-acetyllysine. The (2R)-3-phosphoglycerate site is built by Val23, Asp24, Phe25, Asn26, Gln38, Arg39, Ser62, His63, Gly65, and Arg66. An N6-acetyllysine mark is found at Lys75, Lys86, and Lys97. (2R)-3-phosphoglycerate contacts are provided by Leu122 and Arg123. 2 positions are modified to N6-acetyllysine: Lys131 and Lys146. (2R)-3-phosphoglycerate-binding residues include His170 and Arg171. Tyr196 is subject to Phosphotyrosine. Lys199 is modified (N6-acetyllysine). Residue Gly214 participates in ADP binding. Gly214 serves as a coordination point for CDP. Ala215 and Lys216 together coordinate AMP. Ala215 is a binding site for ATP. Ala215 serves as a coordination point for Mg(2+). Positions 218 and 219 each coordinate Mg(2+). Position 219 (Asp219) interacts with CDP. Lys220 contributes to the AMP binding site. An ATP-binding site is contributed by Lys220. Gly238 is a binding site for ADP. Position 238 (Gly238) interacts with CDP. Gly239 contributes to the AMP binding site. Residue Gly239 participates in ATP binding. 2 positions are modified to N6-acetyllysine: Lys267 and Lys291. An AMP-binding site is contributed by Ala313. ATP is bound at residue Ala313. CDP is bound by residues Gly338 and Phe343. An ADP-binding site is contributed by Phe343. Residue Glu344 participates in AMP binding. Residues Glu344, Asp375, and Thr376 each coordinate ATP. Asp375 contacts Mg(2+).

Belongs to the phosphoglycerate kinase family. As to quaternary structure, monomer. Mg(2+) serves as cofactor. In terms of tissue distribution, testis specific.

It localises to the cytoplasm. The enzyme catalyses (2R)-3-phosphoglycerate + ATP = (2R)-3-phospho-glyceroyl phosphate + ADP. Its pathway is carbohydrate degradation; glycolysis; pyruvate from D-glyceraldehyde 3-phosphate: step 2/5. Its function is as follows. Essential for sperm motility and male fertility but is not required for the completion of spermatogenesis. This chain is Phosphoglycerate kinase 2, found in Sus scrofa (Pig).